The primary structure comprises 143 residues: Dehydrin DHN2 (143 aa).

Positions 1-10 (MEYQGQTGHA) are enriched in polar residues. Positions 1-143 (MEYQGQTGHA…IKEKLPGGQH (143 aa)) are disordered. Residues 24 to 34 (GHGGATGGPTG) show a composition bias toward gly residues. Over residues 35-46 (THGAAAAAAGTG) the composition is skewed to low complexity. Residues 51–61 (TRDDHKTDGVL) show a composition bias toward basic and acidic residues. Over residues 62–71 (RRSGSSSSSS) the composition is skewed to low complexity. Residues 86–101 (KEKIKEKLPGGAHKDA) are compositionally biased toward basic and acidic residues. Positions 109 to 123 (AAGEYAGTGTHGAEA) are enriched in low complexity. Residues 124–143 (TGEKKGVMDKIKEKLPGGQH) are compositionally biased toward basic and acidic residues.

It belongs to the plant dehydrin family.

This is Dehydrin DHN2 (DHN2) from Hordeum vulgare (Barley).